The following is a 328-amino-acid chain: 2,3-diketo-L-gulonate-binding periplasmic protein YiaO (328 aa).

A signal peptide spans 1 to 24; that stretch reads MKLRSVTYALFIAGLAAFSTSSLA.

As to quaternary structure, the complex comprises the extracytoplasmic solute receptor protein YiaO, and the two transmembrane proteins YiaM and YiaN.

The protein resides in the periplasm. Part of the tripartite ATP-independent periplasmic (TRAP) transport system YiaMNO involved in the uptake of 2,3-diketo-L-gulonate. This protein specifically binds 2,3-diketo-L-gulonate. Is not able to bind either L-ascorbate or dehydroascorbate. This Escherichia coli (strain K12) protein is 2,3-diketo-L-gulonate-binding periplasmic protein YiaO (yiaO).